Here is a 1116-residue protein sequence, read N- to C-terminus: MKVDEEKAGVKKLDPTSYKRRQPEQDFPSIHIGFPVPSYSQRKSDSKGHLSGLQKVQWSLKPGKPQQELAGPGIRASSQGGAVDFTKRTRSPAAEQLQDILGEEDEAPNPTLFTEMDTLQHDGDQMEWKESARWIKFEEKVEEGGERWSKPHVSTLSLHSLFELRTCLQTGTVLLDLDSCSLPQIIDDVIEKQIEDGLLRPELRERVSYVLLRKHRHQTKKPIHRSLADIGKSVSTTNRSSARSSSAGPTLHRSTEDLRIRQSTSYGHLCHAQSRSMNDISHTPNTDQRKNKFMKKIPKDSEASNVLVGEVDFLDQPFIAFVRLVQSAMLGGVTEVPVPTRFLFILLGPSGRAKSYNEIGRAIATLMVDDLFSDVAYKARNREDLIAGIDEFLDEVIVLPPGEWDPNIRIEPPKKVPSADKRKSVFSLAEPGQMNGSVGGGGASAGGGGSGGGAGGSGAGGVGSGDEAEMPAMHEIGEELIWTGRFFGGLCLDVKRKLPWFPSDFYDGFHLQSISAVLFIYLGCITNAITFGGLLGDATDNYQGVMESFLGTAMAGSLFCLFSGQPLIILSSTGPILIFEKLLFDFSKANGLDYMEFRLWIGLHSAIQCLILVATDASFIIKYITRFTEEGFSTLISFIFIYDAIKKMIGAFKYYPINTDFKPDFITTYKCECVAPDTVNTTTVNASAPLAPNTNTSLYTPLNLTALDWSLLSKKECLSYGGRLLGSSCQFVPDLALMSFILFFGTYSMTLTLKKFKFSRYFPTKVRTLVADFSIVFSILLFCGIDACFGLQTPKLHVPSVIKPTRPDRGWFVAPFGKNPWWVYPASILPALLVTILIFMDQQITAVIVNRKENKLRKAAGYHLDLFWVGILMALCSFTGLPWYVAATVISIAHIDSLKMETETSAPGEQPQFLGVREQRVTGVMVFILTGISVFLAPILKYIPMPVLYGVFLYMGVASLNGIQFWERCKLFLMPAKHQPDHAFLRHVPLRRIHLFTLVQILCLALLWILKSTMAAIIFPVMILGLIIVRRLLDLIFSQHDLAWIDNILPEKDKKETDKKKKRRKEVHETAEKEVAMPQFLPPSVVKIPMEGIPSDPQNGIHCVARKRSSSWSYSL.

Over residues Met-1–Asp-14 the composition is skewed to basic and acidic residues. Disordered regions lie at residues Met-1–Pro-92, Pro-222–Asp-257, and Pro-431–Glu-467. Residues Met-1–Ser-515 are Cytoplasmic-facing. Positions Ser-233 to Ala-247 are enriched in low complexity. Over residues Ser-437–Ser-464 the composition is skewed to gly residues. Residues Ala-516–Gly-536 form a helical membrane-spanning segment. The Extracellular portion of the chain corresponds to Asp-537 to Leu-558. Residues Phe-559–Phe-579 traverse the membrane as a helical segment. Topologically, residues Glu-580–Trp-600 are cytoplasmic. A helical transmembrane segment spans residues Ile-601–Ile-621. Topologically, residues Lys-622 to Gly-631 are extracellular. The helical transmembrane segment at Phe-632–Phe-652 threads the bilayer. The Cytoplasmic portion of the chain corresponds to Lys-653–Gln-730. The chain crosses the membrane as a helical span at residues Phe-731 to Leu-751. The Extracellular segment spans residues Thr-752–Thr-768. The helical transmembrane segment at Leu-769–Phe-789 threads the bilayer. The Cytoplasmic portion of the chain corresponds to Gly-790–Asn-819. A helical transmembrane segment spans residues Pro-820–Met-840. The Extracellular segment spans residues Asp-841–Asp-865. The helical transmembrane segment at Leu-866–Ala-886 threads the bilayer. At Ala-887–Thr-922 the chain is on the cytoplasmic side. A helical membrane pass occupies residues Gly-923–Ile-943. Residues Pro-944–Met-945 are Extracellular-facing. A helical membrane pass occupies residues Pro-946–Trp-966. Residues Glu-967–His-987 lie on the Cytoplasmic side of the membrane. A run of 2 helical transmembrane segments spans residues Val-988–Trp-1008 and Ile-1009–Val-1029. At Arg-1030–Leu-1116 the chain is on the cytoplasmic side.

It belongs to the anion exchanger (TC 2.A.31) family.

The protein localises to the apical cell membrane. It localises to the basolateral cell membrane. The catalysed reaction is 2 hydrogencarbonate(out) + Na(+)(out) = 2 hydrogencarbonate(in) + Na(+)(in). The enzyme catalyses 3 hydrogencarbonate(out) + Na(+)(out) = 3 hydrogencarbonate(in) + Na(+)(in). Functionally, mediates sodium- and bicarbonate-dependent electrogenic sodium bicarbonate cotransport, with a Na(+):HCO3(-) stoichiometry varying from 1:2 to 1:3. The polypeptide is Electrogenic sodium bicarbonate cotransporter 4 (Slc4a5) (Mus musculus (Mouse)).